The sequence spans 141 residues: MLMPKKTKYSKMMKGRNRGYAVRGIKLNFGDYGIKAVEAGRINSNQIEAARIAMTRYVNREAKVWINVFPDKPLTKKPLQTRMGKGKTGVEEWVMNIKPGRIIFELTGVNEDVARRALELSMHKLPFKTKIVTRESENEIY.

The protein belongs to the universal ribosomal protein uL16 family. In terms of assembly, part of the 50S ribosomal subunit.

Its function is as follows. Binds 23S rRNA and is also seen to make contacts with the A and possibly P site tRNAs. The chain is Large ribosomal subunit protein uL16 from Campylobacter hominis (strain ATCC BAA-381 / DSM 21671 / CCUG 45161 / LMG 19568 / NCTC 13146 / CH001A).